The chain runs to 525 residues: Retinoblastoma-binding-like protein E (525 aa).

WD repeat units lie at residues 25–66 (PKNI…IVRT), 69–108 (HHTGCVNSISWSRNGKKLLTASNDGSLVLWDLATSKILYS), 222–261 (SSNTTVKQIEFSRNHRFMLVSSSDKVLRLISLESTNLYQQ), 267–312 (DSVN…KDLE), and 313–352 (GPKEGLVDVVWHPLRPIIVSISFTGVIYVWTAYFEENWSS). Disordered regions lie at residues 371–398 (DEFDAKDSDNENQEVNNNNNNNIGRNPY) and 462–525 (EKYQ…KKRK). The segment covering 383-392 (QEVNNNNNNN) has biased composition (low complexity). Over residues 462–471 (EKYQKDKEDS) the composition is skewed to basic and acidic residues. The span at 472 to 500 (SSTTSNSTISSSSSPSPSSSSTTTTTTTS) shows a compositional bias: low complexity. The segment covering 501 to 525 (QKKDETQKKEKSTKKERNSDSKKRK) has biased composition (basic and acidic residues).

Its subcellular location is the nucleus. In terms of biological role, involved in mono-, di- and trimethylation at 'Lys-4' of histone H3. Histone H3 'Lys-4' methylation represents a specific tag for epigenetic transcriptional activation. This is Retinoblastoma-binding-like protein E from Dictyostelium discoideum (Social amoeba).